Reading from the N-terminus, the 476-residue chain is Probable G-protein coupled receptor No9 (476 aa).

Residues 1–36 (MEGPPLSPAPADNVTLNVSCGRPATLFDWADHRLIS) lie on the Extracellular side of the membrane. Asn-13 and Asn-17 each carry an N-linked (GlcNAc...) asparagine glycan. A helical transmembrane segment spans residues 37–60 (LLALAFLNLMVVAGNLLVVMAVFV). Residues 61-69 (HSKLRTVTN) are Cytoplasmic-facing. The helical transmembrane segment at 70-93 (LFIVSLACADLLVGMLVLPFSATL) threads the bilayer. The Extracellular portion of the chain corresponds to 94 to 103 (EVLDVWLYGD). Residues 104–127 (VWCSVWLAVDVWMCTSSILNLCAI) traverse the membrane as a helical segment. Cys-106 and Cys-192 form a disulfide bridge. Over 128-152 (SLDRYLAVSQPISYPSLMSTRRAKQ) the chain is Cytoplasmic. A helical membrane pass occupies residues 153–172 (LIAAVWVLSFVICFPPLVGW). At 173-200 (NDRPGTLIGSRGSSACRLTCELTNERGY) the chain is on the extracellular side. Residues 201 to 221 (VIYSALGSFFLPSTVMLFFYG) traverse the membrane as a helical segment. The Cytoplasmic segment spans residues 222–375 (RIYRTAVSTT…FRMETKAAKT (154 aa)). Low complexity predominate over residues 266-278 (AAAGGARAHGQVR). 2 disordered regions span residues 266–293 (AAAG…NKPS) and 317–351 (DSRP…PRFI). A helical membrane pass occupies residues 376 to 396 (VGIIVGLFILCWLPFFVCYLV). Over 397–406 (RGFCADCVPP) the chain is Extracellular. Residues 407-430 (LLFSVFFWLGYCNSAVNPCVYALC) traverse the membrane as a helical segment. Over 431-476 (SRDFRFAFSSILCKCVCRRGAMERRFRRTLLVGNRSQTEEDCEVAD) the chain is Cytoplasmic.

This sequence belongs to the G-protein coupled receptor 1 family.

Its subcellular location is the cell membrane. Functionally, orphan G-protein coupled receptor. The protein is Probable G-protein coupled receptor No9 of Amphibalanus amphitrite (Striped barnacle).